We begin with the raw amino-acid sequence, 379 residues long: Chorismate synthase (379 aa).

NADP(+)-binding residues include Arg-48 and Arg-54. FMN contacts are provided by residues Arg-125–Ser-127, Asn-241–Ala-242, Gly-286, Lys-301–Ser-305, and Arg-327.

The protein belongs to the chorismate synthase family. Homotetramer. Requires FMNH2 as cofactor.

The enzyme catalyses 5-O-(1-carboxyvinyl)-3-phosphoshikimate = chorismate + phosphate. It functions in the pathway metabolic intermediate biosynthesis; chorismate biosynthesis; chorismate from D-erythrose 4-phosphate and phosphoenolpyruvate: step 7/7. Its function is as follows. Catalyzes the anti-1,4-elimination of the C-3 phosphate and the C-6 proR hydrogen from 5-enolpyruvylshikimate-3-phosphate (EPSP) to yield chorismate, which is the branch point compound that serves as the starting substrate for the three terminal pathways of aromatic amino acid biosynthesis. This reaction introduces a second double bond into the aromatic ring system. In Rhodospirillum centenum (strain ATCC 51521 / SW), this protein is Chorismate synthase.